The chain runs to 119 residues: Ribonuclease P protein component (119 aa).

Belongs to the RnpA family. As to quaternary structure, consists of a catalytic RNA component (M1 or rnpB) and a protein subunit.

The enzyme catalyses Endonucleolytic cleavage of RNA, removing 5'-extranucleotides from tRNA precursor.. Its function is as follows. RNaseP catalyzes the removal of the 5'-leader sequence from pre-tRNA to produce the mature 5'-terminus. It can also cleave other RNA substrates such as 4.5S RNA. The protein component plays an auxiliary but essential role in vivo by binding to the 5'-leader sequence and broadening the substrate specificity of the ribozyme. The sequence is that of Ribonuclease P protein component from Bifidobacterium longum (strain DJO10A).